Consider the following 460-residue polypeptide: Anthocyanidin 3-O-glucoside 5-O-glucosyltransferase 1 (460 aa).

A signal peptide spans 1–22; that stretch reads MVRRRVLLATFPAQGHINPALQ. The active-site Proton acceptor is His16. Residue His16 participates in an anthocyanidin binding. Gln338, His353, Trp356, Asn357, Ser358, Glu361, Asp377, and Gln378 together coordinate UDP-alpha-D-glucose.

Belongs to the UDP-glycosyltransferase family.

The enzyme catalyses an anthocyanidin 3-O-beta-D-glucoside + UDP-alpha-D-glucose = an anthocyanidin 3,5-di-O-beta-D-glucoside + UDP + 2 H(+). The protein operates within pigment biosynthesis; anthocyanin biosynthesis. Its function is as follows. Catalyzes the glucosylation at the O-5 position of anthocyanidin 3-glucosides to form anthocyanidin 3,5-di-O-glucosides using UDP-glucose as sugar donor. Anthocyanidin 3,5-di-O-glucosides are molecules that are responsible for pigmentation. Also acts on anthocyanidin 3-O-(6-O-malonylglucoside). Much less active with hydroxycinnamoylglucose derivatives. No activity in the absence of the 3-O-glucoside group. The chain is Anthocyanidin 3-O-glucoside 5-O-glucosyltransferase 1 (PF3R4) from Perilla frutescens (Beefsteak mint).